The primary structure comprises 427 residues: Acyltransferase fer5 (427 aa).

Residues M1–P24 form a disordered region. Residue H342 coordinates substrate. The active-site Proton acceptor is the E380.

It belongs to the lysine N-acyltransferase mbtK family.

It functions in the pathway siderophore biosynthesis. Functionally, acyltransferase; part of the gene cluster that mediates the biosynthesis of siderophore ferrichrome A which is contributing to organismal virulence. The first step of ferrichrome A biosynthesis is performed by the HMG-CoA synthase hcs1 which catalyzes the generation of HMG-CoA and CoA using acetoacetyl-CoA and acetyl-CoA as substrates. The enoyl-CoA isomerase/hydratase fer4 then catalyzes the conversion of hcs1-produced HMG-CoA to methylglutaconyl-CoA. The acyltransferase fer5 then fuses the fer4-generated methylglutaconyl-CoA with sid1-generated hydroxyornithine to yield methylglutaconyl hydroxyornithine. Methylglutaconyl hydroxyornithine is then available for use by the NRPS fer3 to generate ferrichrome A. The chain is Acyltransferase fer5 from Mycosarcoma maydis (Corn smut fungus).